Consider the following 199-residue polypeptide: MRTATITRETKETQIYLTLDLDGSGRSEIDTNIGFLDHMLTLLAFHSDFDIKLTAHGDHENSGMDPHHLIEDVAISLGKCINEALGDKLGIRRYGSFTIPMDEALVTCDLDISGRPYLVFNADLSGNKKLGGYDTEMTEEFFRALAFNAGITLHLNEHYGKNTHHIIEGIFKSMARALKQAISIDETKVGKIPSSKGVL.

Belongs to the imidazoleglycerol-phosphate dehydratase family.

It localises to the cytoplasm. The enzyme catalyses D-erythro-1-(imidazol-4-yl)glycerol 3-phosphate = 3-(imidazol-4-yl)-2-oxopropyl phosphate + H2O. It functions in the pathway amino-acid biosynthesis; L-histidine biosynthesis; L-histidine from 5-phospho-alpha-D-ribose 1-diphosphate: step 6/9. The chain is Imidazoleglycerol-phosphate dehydratase from Lactococcus lactis subsp. cremoris (strain MG1363).